The following is a 126-amino-acid chain: Glycine cleavage system H protein (126 aa).

The Lipoyl-binding domain maps to 22 to 103; sequence KAYIGITDYA…PYGSWMALVE (82 aa). Lys63 is subject to N6-lipoyllysine.

The protein belongs to the GcvH family. As to quaternary structure, the glycine cleavage system is composed of four proteins: P, T, L and H. (R)-lipoate is required as a cofactor.

The glycine cleavage system catalyzes the degradation of glycine. The H protein shuttles the methylamine group of glycine from the P protein to the T protein. The polypeptide is Glycine cleavage system H protein (Thermoanaerobacter pseudethanolicus (strain ATCC 33223 / 39E) (Clostridium thermohydrosulfuricum)).